The following is a 186-amino-acid chain: Protein FAM9B (186 aa).

The segment at 1–93 is disordered; that stretch reads MAAWGKKHAG…KHALRKKQLK (93 aa). Basic and acidic residues-rich tracts occupy residues 10–27 and 34–58; these read GKDP…FTET and DEHG…KPED. The span at 66 to 93 shows a compositional bias: basic residues; the sequence is KRKRMKMDKTCSKTKNKSKHALRKKQLK.

It belongs to the XLR/SYCP3 family. In terms of tissue distribution, expressed in testis and ovary (at protein level).

Its subcellular location is the nucleus. It localises to the cytoplasm. The protein localises to the chromosome. May play a role in meiosis. This chain is Protein FAM9B, found in Homo sapiens (Human).